The sequence spans 419 residues: Isocitrate dehydrogenase [NADP] 1 (419 aa).

Thr-105 is an NADP(+) binding site. The D-threo-isocitrate site is built by Ser-114, Asn-116, Arg-120, Arg-130, and Arg-154. A Mg(2+)-binding site is contributed by Asp-308. Residues 340 to 346 (HGTAPKY), Asn-353, Tyr-392, and Arg-396 contribute to the NADP(+) site.

Belongs to the isocitrate and isopropylmalate dehydrogenases family. Homodimer. It depends on Mg(2+) as a cofactor. Mn(2+) serves as cofactor.

The enzyme catalyses D-threo-isocitrate + NADP(+) = 2-oxoglutarate + CO2 + NADPH. With respect to regulation, IDH activity is not significantly affected by monovalent cations. The combined addition of Mn(2+) and another divalent cation results in the decrease of the activity. Catalyzes the oxidative decarboxylation of isocitrate to 2-oxoglutarate and carbon dioxide with the concomitant reduction of NADP(+). Cannot use NAD(+). The polypeptide is Isocitrate dehydrogenase [NADP] 1 (Psychrobacter sp. (strain 13A)).